We begin with the raw amino-acid sequence, 158 residues long: Male-specific protein scotti (158 aa).

The segment at 24 to 43 is disordered; it reads NVPDGNGDGDGDGDGDGNDA. Positions 30–42 are enriched in acidic residues; the sequence is GDGDGDGDGDGND.

The protein belongs to the male-specific scotti family.

In terms of biological role, post-meiotically transcribed gene that has a role in late spermiogenesis; required for actin cone progression during spermatid individualization. The sequence is that of Male-specific protein scotti from Drosophila virilis (Fruit fly).